We begin with the raw amino-acid sequence, 64 residues long: Alpha-conotoxin-like Ac1.1b (64 aa).

Positions 1–21 (MGMRMMFTLFLLVVLTTTVVS) are cleaved as a signal peptide. The propeptide occupies 22–47 (FPSDSASDGRDDEAKDERSDMYKSKR). The disordered stretch occupies residues 23–46 (PSDSASDGRDDEAKDERSDMYKSK). The span at 28 to 44 (SDGRDDEAKDERSDMYK) shows a compositional bias: basic and acidic residues. Disulfide bonds link Cys-51–Cys-56 and Cys-52–Cys-62. Cys-62 carries the post-translational modification Cysteine amide.

It belongs to the conotoxin A superfamily. In terms of tissue distribution, expressed by the venom duct.

The protein resides in the secreted. In terms of biological role, alpha-conotoxins act on postsynaptic membranes, they bind to the nicotinic acetylcholine receptors (nAChR) and thus inhibit them. The protein is Alpha-conotoxin-like Ac1.1b of Conus achatinus (Little frog cone).